The following is a 239-amino-acid chain: DNA repair protein RecO (239 aa).

This sequence belongs to the RecO family.

Involved in DNA repair and RecF pathway recombination. The polypeptide is DNA repair protein RecO (Cereibacter sphaeroides (strain ATCC 17029 / ATH 2.4.9) (Rhodobacter sphaeroides)).